A 340-amino-acid polypeptide reads, in one-letter code: Heat-inducible transcription repressor HrcA (340 aa).

Belongs to the HrcA family.

In terms of biological role, negative regulator of class I heat shock genes (grpE-dnaK-dnaJ and groELS operons). Prevents heat-shock induction of these operons. The chain is Heat-inducible transcription repressor HrcA from Burkholderia mallei (strain NCTC 10247).